The primary structure comprises 1254 residues: Receptor tyrosine-protein kinase erbB-2 (1254 aa).

A signal peptide spans 1–22 (MELAAWCGWGLLLALLSPGASG). Residues 23 to 652 (TQVCTGTDMK…PAEQRASPAT (630 aa)) are Extracellular-facing. An intrachain disulfide couples cysteine 26 to cysteine 53. Residues asparagine 68, asparagine 125, and asparagine 187 are each glycosylated (N-linked (GlcNAc...) asparagine). 14 disulfide bridges follow: cysteine 162/cysteine 192, cysteine 195/cysteine 204, cysteine 199/cysteine 212, cysteine 236/cysteine 244, cysteine 240/cysteine 252, cysteine 255/cysteine 264, cysteine 268/cysteine 295, cysteine 299/cysteine 311, cysteine 315/cysteine 331, cysteine 334/cysteine 338, cysteine 342/cysteine 367, cysteine 475/cysteine 504, cysteine 511/cysteine 520, and cysteine 515/cysteine 528. An N-linked (GlcNAc...) asparagine glycan is attached at asparagine 259. A glycan (N-linked (GlcNAc...) asparagine) is linked at asparagine 530. 8 disulfide bridges follow: cysteine 531–cysteine 540, cysteine 544–cysteine 560, cysteine 563–cysteine 576, cysteine 567–cysteine 584, cysteine 587–cysteine 596, cysteine 600–cysteine 623, cysteine 626–cysteine 634, and cysteine 630–cysteine 642. Asparagine 571 is a glycosylation site (N-linked (GlcNAc...) asparagine). Asparagine 629 is a glycosylation site (N-linked (GlcNAc...) asparagine). Residues 653–675 (SIIATVVGILLFLVIGVVVGILI) form a helical membrane-spanning segment. The required for interaction with KPNB1 and EEA1 stretch occupies residues 676-689 (KRRRQKIRKYTMRR). A Nuclear localization signal motif is present at residues 676–689 (KRRRQKIRKYTMRR). At 676 to 1254 (KRRRQKIRKY…PEYLGLDVPV (579 aa)) the chain is on the cytoplasmic side. The Protein kinase domain maps to 720 to 987 (LRKVKVLGSG…RMARDPQRFV (268 aa)). Residues 726–734 (LGSGAFGTV) and lysine 753 contribute to the ATP site. The Proton acceptor role is filled by aspartate 845. A Phosphotyrosine modification is found at tyrosine 877. Disordered regions lie at residues 1029-1116 (GFFF…SEDP) and 1133-1179 (CSPQ…GKNG). 4 positions are modified to phosphoserine: serine 1054, serine 1078, serine 1083, and serine 1107. Tyrosine 1112 is modified (phosphotyrosine). At tyrosine 1139 the chain carries Phosphotyrosine; by autocatalysis. Positions 1146 to 1161 (RPQPPLTPEGPLPPVR) are enriched in pro residues. Threonine 1166 carries the post-translational modification Phosphothreonine. Positions 1195–1197 (EYL) are interaction with PIK3C2B. A Phosphotyrosine modification is found at tyrosine 1196. Positions 1223–1254 (DQDPSERGSPPNTFEGTPTAENPEYLGLDVPV) are disordered. A compositionally biased stretch (polar residues) spans 1232–1242 (PPNTFEGTPTA). Residue tyrosine 1247 is modified to Phosphotyrosine; by autocatalysis.

The protein belongs to the protein kinase superfamily. Tyr protein kinase family. EGF receptor subfamily. In terms of assembly, homodimer. Heterodimer with EGFR, ERBB3 and ERBB4. Part of a complex with EGFR and either PIK3C2A or PIK3C2B. May interact with PIK3C2B when phosphorylated on Tyr-1196. Interacts with PRKCABP and PLXNB1. Interacts (when phosphorylated on Tyr-1247) with MEMO. Interacts with MUC1. Interacts (when phosphorylated on Tyr-1139) with GRB7 (via SH2 domain). Interacts (when phosphorylated on Tyr-1247) with ERBIN. Interacts with SRC, KPNB1, RANBP2, EEA1, CRM1, CLTC, PTK6, RPA194, MYOC and ACTB. Interacts (preferentially with the tyrosine phosphorylated form) with CPNE3; this interaction occurs at the cell membrane and is increased in a growth factor heregulin-dependent manner. Interacts with HSP90AA1 and HSP90AB1 in an ATP-dependent manner; the interaction suppresses ERBB2 kinase activity. Interacts with SORL1; this interaction regulates ERBB2 subcellular distribution by promoting its recycling after internalization from endosomes back to the plasma membrane, hence stimulates ERBB2-mediated signaling. Interacts with SH3BGRL. Interacts with ROR1. Post-translationally, autophosphorylated. Autophosphorylation occurs in trans, i.e. one subunit of the dimeric receptor phosphorylates tyrosine residues on the other subunit. Ligand-binding increases phosphorylation on tyrosine residues. Signaling via SEMA4C promotes phosphorylation at Tyr-1247. Dephosphorylated by PTPN12.

It is found in the cell membrane. The protein resides in the cell projection. The protein localises to the ruffle membrane. It localises to the early endosome. Its subcellular location is the cytoplasm. It is found in the perinuclear region. The protein resides in the nucleus. The catalysed reaction is L-tyrosyl-[protein] + ATP = O-phospho-L-tyrosyl-[protein] + ADP + H(+). Its function is as follows. Protein tyrosine kinase that is part of several cell surface receptor complexes, but that apparently needs a coreceptor for ligand binding. Essential component of a neuregulin-receptor complex, although neuregulins do not interact with it alone. GP30 is a potential ligand for this receptor. Regulates outgrowth and stabilization of peripheral microtubules (MTs). Upon ERBB2 activation, the MEMO1-RHOA-DIAPH1 signaling pathway elicits the phosphorylation and thus the inhibition of GSK3B at cell membrane. This prevents the phosphorylation of APC and CLASP2, allowing its association with the cell membrane. In turn, membrane-bound APC allows the localization of MACF1 to the cell membrane, which is required for microtubule capture and stabilization. In terms of biological role, in the nucleus is involved in transcriptional regulation. Associates with the 5'-TCAAATTC-3' sequence in the PTGS2/COX-2 promoter and activates its transcription. Implicated in transcriptional activation of CDKN1A; the function involves STAT3 and SRC. Involved in the transcription of rRNA genes by RNA Pol I and enhances protein synthesis and cell growth. The chain is Receptor tyrosine-protein kinase erbB-2 (ERBB2) from Mesocricetus auratus (Golden hamster).